A 568-amino-acid polypeptide reads, in one-letter code: Proline--tRNA ligase (568 aa).

The protein belongs to the class-II aminoacyl-tRNA synthetase family. ProS type 1 subfamily. In terms of assembly, homodimer.

The protein resides in the cytoplasm. The enzyme catalyses tRNA(Pro) + L-proline + ATP = L-prolyl-tRNA(Pro) + AMP + diphosphate. Its function is as follows. Catalyzes the attachment of proline to tRNA(Pro) in a two-step reaction: proline is first activated by ATP to form Pro-AMP and then transferred to the acceptor end of tRNA(Pro). As ProRS can inadvertently accommodate and process non-cognate amino acids such as alanine and cysteine, to avoid such errors it has two additional distinct editing activities against alanine. One activity is designated as 'pretransfer' editing and involves the tRNA(Pro)-independent hydrolysis of activated Ala-AMP. The other activity is designated 'posttransfer' editing and involves deacylation of mischarged Ala-tRNA(Pro). The misacylated Cys-tRNA(Pro) is not edited by ProRS. This Listeria monocytogenes serotype 4a (strain HCC23) protein is Proline--tRNA ligase.